A 189-amino-acid chain; its full sequence is Casparian strip membrane protein 1 (189 aa).

Residues 1 to 25 lie on the Cytoplasmic side of the membrane; the sequence is MMQAESGSAEAKGPLPPPVGRKRRG. Residues 26–46 form a helical membrane-spanning segment; that stretch reads LGILDFLLRLLAIGATLSAAI. Topologically, residues 47-73 are extracellular; it reads TMGTTNETLQFFTQFFQFKARFYDLSA. N-linked (GlcNAc...) asparagine glycosylation is present at Asn52. Residues 74-94 form a helical membrane-spanning segment; the sequence is FIYFVIANAIVGGYLLLSLPI. The Cytoplasmic portion of the chain corresponds to 95–108; that stretch reads SILNIVRPRAASSR. A helical transmembrane segment spans residues 109-129; sequence VFLIFFDTVMVAVCTSGAAAA. The Extracellular segment spans residues 130–158; sequence VAILYVARKGNSRTNWFAICQRFNSFCNQ. Residues 159 to 179 form a helical membrane-spanning segment; it reads AIGAVSASFAGVVFLILLVLL. The Cytoplasmic segment spans residues 180–189; that stretch reads SASTLYRRRP.

This sequence belongs to the Casparian strip membrane proteins (CASP) family. As to quaternary structure, homodimer and heterodimers.

It localises to the cell membrane. Functionally, regulates membrane-cell wall junctions and localized cell wall deposition. Required for establishment of the Casparian strip membrane domain (CSD) and the subsequent formation of Casparian strips, a cell wall modification of the root endodermis that determines an apoplastic barrier between the intraorganismal apoplasm and the extraorganismal apoplasm and prevents lateral diffusion. In Picea glauca (White spruce), this protein is Casparian strip membrane protein 1.